Consider the following 200-residue polypeptide: 3-isopropylmalate dehydratase small subunit (200 aa).

The protein belongs to the LeuD family. LeuD type 1 subfamily. In terms of assembly, heterodimer of LeuC and LeuD.

It carries out the reaction (2R,3S)-3-isopropylmalate = (2S)-2-isopropylmalate. It participates in amino-acid biosynthesis; L-leucine biosynthesis; L-leucine from 3-methyl-2-oxobutanoate: step 2/4. Catalyzes the isomerization between 2-isopropylmalate and 3-isopropylmalate, via the formation of 2-isopropylmaleate. The sequence is that of 3-isopropylmalate dehydratase small subunit from Pectobacterium atrosepticum (strain SCRI 1043 / ATCC BAA-672) (Erwinia carotovora subsp. atroseptica).